A 396-amino-acid chain; its full sequence is Elongation factor Tu (396 aa).

The tr-type G domain maps to 10–206 (KPHVNIGTIG…AVDNYIPEPE (197 aa)). The interval 19–26 (GHVDHGKT) is G1. GTP is bound at residue 19 to 26 (GHVDHGKT). T26 contributes to the Mg(2+) binding site. The G2 stretch occupies residues 60 to 64 (GITIA). The segment at 81–84 (DCPG) is G3. Residues 81-85 (DCPGH) and 136-139 (NKAD) each bind GTP. Positions 136–139 (NKAD) are G4. The tract at residues 174–176 (SAL) is G5.

The protein belongs to the TRAFAC class translation factor GTPase superfamily. Classic translation factor GTPase family. EF-Tu/EF-1A subfamily. As to quaternary structure, monomer.

It localises to the cytoplasm. The enzyme catalyses GTP + H2O = GDP + phosphate + H(+). In terms of biological role, GTP hydrolase that promotes the GTP-dependent binding of aminoacyl-tRNA to the A-site of ribosomes during protein biosynthesis. The protein is Elongation factor Tu of Geobacter sulfurreducens (strain ATCC 51573 / DSM 12127 / PCA).